We begin with the raw amino-acid sequence, 698 residues long: Sulfhydryl oxidase 2 (698 aa).

The N-terminal stretch at 1 to 21 (MAAAGAAVARSPGIGAGPALR) is a signal peptide. In terms of domain architecture, Thioredoxin spans 34 to 178 (PRLLVLLAAA…RQTMIDFLQN (145 aa)). Asparagine 77 carries N-linked (GlcNAc...) asparagine glycosylation. Residues cysteine 91 and cysteine 94 each act as nucleophile in the active site. 2 disulfides stabilise this stretch: cysteine 91/cysteine 94 and cysteine 122/cysteine 131. N-linked (GlcNAc...) asparagine glycans are attached at residues asparagine 178, asparagine 218, and asparagine 266. Cysteine 418 and cysteine 430 form a disulfide bridge. An ERV/ALR sulfhydryl oxidase domain is found at 421–530 (SRSELRGYPC…EDPRFPKLQW (110 aa)). FAD contacts are provided by residues arginine 426, tryptophan 433, histidine 437, glutamate 478, histidine 482, 505 to 512 (WKKHNMVN), lysine 527, and tryptophan 530. Cysteine 476 and cysteine 479 are joined by a disulfide. A disulfide bridge connects residues cysteine 536 and cysteine 539. The interval 570–624 (TYSADQGDSSEGGTLARGEEEEKRLTPPEVSHGDRDTQSVRPPGALGPRPALPES) is disordered. Over residues 572–581 (SADQGDSSEG) the composition is skewed to polar residues. Residue serine 579 is modified to Phosphoserine. Positions 586-607 (RGEEEEKRLTPPEVSHGDRDTQ) are enriched in basic and acidic residues. The segment covering 610 to 622 (RPPGALGPRPALP) has biased composition (low complexity). The chain crosses the membrane as a helical span at residues 662–682 (SLCVVLYVASSLFLMVMYFFF).

The protein belongs to the quiescin-sulfhydryl oxidase (QSOX) family. The cofactor is FAD. Expressed in pancreas, brain, placenta, kidney, heart and fetal tissues. Weakly expressed in lung, liver and skeletal muscles.

The protein resides in the membrane. Its subcellular location is the secreted. It is found in the cell membrane. It localises to the nucleus membrane. The enzyme catalyses 2 R'C(R)SH + O2 = R'C(R)S-S(R)CR' + H2O2. Functionally, catalyzes the oxidation of sulfhydryl groups in peptide and protein thiols to disulfides with the reduction of oxygen to hydrogen peroxide. May contribute to disulfide bond formation in a variety of secreted proteins. Also seems to play a role in regulating the sensitization of neuroblastoma cells for interferon-gamma-induced apoptosis. This chain is Sulfhydryl oxidase 2 (QSOX2), found in Homo sapiens (Human).